A 326-amino-acid polypeptide reads, in one-letter code: Myeloid protein 1 (326 aa).

A signal peptide spans 1-18; the sequence is MPALSLIALLSLVSTAFA. Tandem repeats lie at residues 28-162 and 177-312. 3 cysteine pairs are disulfide-bonded: Cys-37-Cys-74, Cys-48-Cys-53, and Cys-113-Cys-156. Residues His-67, Asp-71, and His-152 each contribute to the Zn(2+) site. The disordered stretch occupies residues 307–326; the sequence is DRSDPTSNLERGKGESEMEV.

The protein belongs to the LECT2/MIM-1 family. Substrate for arginine-specific ADP-ribosyltransferase.

The protein resides in the cytoplasmic granule. The chain is Myeloid protein 1 (MIM1) from Gallus gallus (Chicken).